Consider the following 609-residue polypeptide: Zinc metalloproteinase-disintegrin-like (609 aa).

The first 20 residues, 1-20, serve as a signal peptide directing secretion; sequence MIQVLLVTICLAALPYQGSS. A propeptide spanning residues 21-189 is cleaved from the precursor; that stretch reads IILESGNVND…KKASQLVVTA (169 aa). A Peptidase M12B domain is found at 198–393; it reads RFVELVLVVD…QNPECIVNEP (196 aa). Residues Glu-201 and Asp-285 each contribute to the Ca(2+) site. Cystine bridges form between Cys-308–Cys-388, Cys-348–Cys-372, and Cys-350–Cys-355. His-333 is a Zn(2+) binding site. Glu-334 is a catalytic residue. Zn(2+)-binding residues include His-337 and His-343. Residue Asn-371 is glycosylated (N-linked (GlcNAc...) asparagine). The Ca(2+) site is built by Cys-388, Asn-391, Val-403, Asn-406, Leu-408, Glu-410, Glu-413, and Asp-416. Residues 401–487 form the Disintegrin domain; that stretch reads PPVCGNELLE…ECPADVFHKN (87 aa). 14 disulfides stabilise this stretch: Cys-404/Cys-433, Cys-415/Cys-428, Cys-417/Cys-423, Cys-427/Cys-450, Cys-441/Cys-447, Cys-446/Cys-472, Cys-459/Cys-479, Cys-466/Cys-498, Cys-491/Cys-503, Cys-510/Cys-560, Cys-525/Cys-571, Cys-538/Cys-548, Cys-555/Cys-597, and Cys-591/Cys-602. Positions 465–467 match the D/ECD-tripeptide motif; the sequence is ECD. Asp-467, Pro-468, Glu-470, Asp-482, and Val-483 together coordinate Ca(2+).

It belongs to the venom metalloproteinase (M12B) family. P-III subfamily. P-IIIa sub-subfamily. As to quaternary structure, monomer. Requires Zn(2+) as cofactor. As to expression, expressed by the venom gland.

The protein resides in the secreted. In terms of biological role, this protein is a zinc metalloprotease from snake venom that possesses hemorrhagic activity. The sequence is that of Zinc metalloproteinase-disintegrin-like from Crotalus durissus durissus (Central American rattlesnake).